The chain runs to 150 residues: MKLILTAAVENLGVAGDIVEVKNGYGRNLLLPRGLAIVATPGAEKQIEGIKRAQEAREIRDLDHAREVKVALEALEGVTIAVRTSESGKLFGSVKTDDIVDAVKAAGGPNLDKRAIVLPKNLVKTTGKYQVEAKLTDGIVSRVKFEVVAA.

The protein belongs to the bacterial ribosomal protein bL9 family.

Functionally, binds to the 23S rRNA. The polypeptide is Large ribosomal subunit protein bL9 (Corynebacterium glutamicum (strain ATCC 13032 / DSM 20300 / JCM 1318 / BCRC 11384 / CCUG 27702 / LMG 3730 / NBRC 12168 / NCIMB 10025 / NRRL B-2784 / 534)).